The sequence spans 155 residues: Endoribonuclease YbeY (155 aa).

Histidine 114, histidine 118, and histidine 124 together coordinate Zn(2+).

The protein belongs to the endoribonuclease YbeY family. The cofactor is Zn(2+).

It localises to the cytoplasm. In terms of biological role, single strand-specific metallo-endoribonuclease involved in late-stage 70S ribosome quality control and in maturation of the 3' terminus of the 16S rRNA. The polypeptide is Endoribonuclease YbeY (Salmonella arizonae (strain ATCC BAA-731 / CDC346-86 / RSK2980)).